A 259-amino-acid polypeptide reads, in one-letter code: Thiazole synthase (259 aa).

Lysine 98 (schiff-base intermediate with DXP) is an active-site residue. 1-deoxy-D-xylulose 5-phosphate-binding positions include glycine 159, 185 to 186 (AG), and 207 to 208 (NS).

It belongs to the ThiG family. As to quaternary structure, homotetramer. Forms heterodimers with either ThiH or ThiS.

The protein resides in the cytoplasm. It carries out the reaction [ThiS sulfur-carrier protein]-C-terminal-Gly-aminoethanethioate + 2-iminoacetate + 1-deoxy-D-xylulose 5-phosphate = [ThiS sulfur-carrier protein]-C-terminal Gly-Gly + 2-[(2R,5Z)-2-carboxy-4-methylthiazol-5(2H)-ylidene]ethyl phosphate + 2 H2O + H(+). It functions in the pathway cofactor biosynthesis; thiamine diphosphate biosynthesis. Functionally, catalyzes the rearrangement of 1-deoxy-D-xylulose 5-phosphate (DXP) to produce the thiazole phosphate moiety of thiamine. Sulfur is provided by the thiocarboxylate moiety of the carrier protein ThiS. In vitro, sulfur can be provided by H(2)S. The chain is Thiazole synthase from Chlorobium phaeobacteroides (strain BS1).